The following is a 196-amino-acid chain: Protein GrpE (196 aa).

Residues 1 to 26 are compositionally biased toward basic and acidic residues; it reads MQEPHNQEPIEEQKLSEMEDTLEKQH. The segment at 1 to 40 is disordered; sequence MQEPHNQEPIEEQKLSEMEDTLEKQHSGASTENTERAEEG.

The protein belongs to the GrpE family. In terms of assembly, homodimer.

The protein localises to the cytoplasm. In terms of biological role, participates actively in the response to hyperosmotic and heat shock by preventing the aggregation of stress-denatured proteins, in association with DnaK and GrpE. It is the nucleotide exchange factor for DnaK and may function as a thermosensor. Unfolded proteins bind initially to DnaJ; upon interaction with the DnaJ-bound protein, DnaK hydrolyzes its bound ATP, resulting in the formation of a stable complex. GrpE releases ADP from DnaK; ATP binding to DnaK triggers the release of the substrate protein, thus completing the reaction cycle. Several rounds of ATP-dependent interactions between DnaJ, DnaK and GrpE are required for fully efficient folding. This is Protein GrpE from Nitrosomonas eutropha (strain DSM 101675 / C91 / Nm57).